The following is a 187-amino-acid chain: Crossover junction endodeoxyribonuclease RuvC (187 aa).

Active-site residues include Asp-7, Glu-67, and Asp-140. 3 residues coordinate Mg(2+): Asp-7, Glu-67, and Asp-140.

The protein belongs to the RuvC family. As to quaternary structure, homodimer which binds Holliday junction (HJ) DNA. The HJ becomes 2-fold symmetrical on binding to RuvC with unstacked arms; it has a different conformation from HJ DNA in complex with RuvA. In the full resolvosome a probable DNA-RuvA(4)-RuvB(12)-RuvC(2) complex forms which resolves the HJ. Mg(2+) serves as cofactor.

The protein resides in the cytoplasm. It carries out the reaction Endonucleolytic cleavage at a junction such as a reciprocal single-stranded crossover between two homologous DNA duplexes (Holliday junction).. In terms of biological role, the RuvA-RuvB-RuvC complex processes Holliday junction (HJ) DNA during genetic recombination and DNA repair. Endonuclease that resolves HJ intermediates. Cleaves cruciform DNA by making single-stranded nicks across the HJ at symmetrical positions within the homologous arms, yielding a 5'-phosphate and a 3'-hydroxyl group; requires a central core of homology in the junction. The consensus cleavage sequence is 5'-(A/T)TT(C/G)-3'. Cleavage occurs on the 3'-side of the TT dinucleotide at the point of strand exchange. HJ branch migration catalyzed by RuvA-RuvB allows RuvC to scan DNA until it finds its consensus sequence, where it cleaves and resolves the cruciform DNA. The protein is Crossover junction endodeoxyribonuclease RuvC of Prosthecochloris aestuarii (strain DSM 271 / SK 413).